The chain runs to 218 residues: Ribose-5-phosphate isomerase A (218 aa).

Substrate-binding positions include 28–31 (TGST), 81–84 (DGAD), and 94–97 (KGGG). Glutamate 103 serves as the catalytic Proton acceptor. A substrate-binding site is contributed by lysine 121.

Belongs to the ribose 5-phosphate isomerase family. As to quaternary structure, homodimer.

The catalysed reaction is aldehydo-D-ribose 5-phosphate = D-ribulose 5-phosphate. The protein operates within carbohydrate degradation; pentose phosphate pathway; D-ribose 5-phosphate from D-ribulose 5-phosphate (non-oxidative stage): step 1/1. Its function is as follows. Catalyzes the reversible conversion of ribose-5-phosphate to ribulose 5-phosphate. This is Ribose-5-phosphate isomerase A from Aliivibrio salmonicida (strain LFI1238) (Vibrio salmonicida (strain LFI1238)).